The following is a 116-amino-acid chain: NADH-ubiquinone oxidoreductase chain 3 (116 aa).

A run of 3 helical transmembrane segments spans residues 3–23, 56–76, and 85–105; these read LITTIIAITITLSAVLATVSF, FFLIAILFLLFDLEIALLLPL, and PALTLAWSAAVLALLTLGLIY.

The protein belongs to the complex I subunit 3 family.

The protein localises to the mitochondrion membrane. The enzyme catalyses a ubiquinone + NADH + 5 H(+)(in) = a ubiquinol + NAD(+) + 4 H(+)(out). Core subunit of the mitochondrial membrane respiratory chain NADH dehydrogenase (Complex I) that is believed to belong to the minimal assembly required for catalysis. Complex I functions in the transfer of electrons from NADH to the respiratory chain. The immediate electron acceptor for the enzyme is believed to be ubiquinone. This is NADH-ubiquinone oxidoreductase chain 3 (MT-ND3) from Salmo trutta (Brown trout).